Consider the following 487-residue polypeptide: 26S proteasome non-ATPase regulatory subunit 3 homolog B (487 aa).

Residues 1 to 21 (MTQDVEMKDNQTPTQSVVSAP) form a disordered region. The span at 10–21 (NQTPTQSVVSAP) shows a compositional bias: polar residues. The PCI domain occupies 239–420 (CRYLFYLGKI…GCMVSKETGD (182 aa)). The segment at 452–487 (PPNTHREKESEEKRREMKQQEEELAKYMAEEDDDDF) is disordered. Positions 455 to 480 (THREKESEEKRREMKQQEEELAKYMA) are enriched in basic and acidic residues.

It belongs to the proteasome subunit S3 family. In terms of assembly, component of the 19S regulatory particle (RP/PA700) lid subcomplex of the 26S proteasome. The 26S proteasome is composed of a core protease (CP), known as the 20S proteasome, capped at one or both ends by the 19S regulatory particle (RP/PA700). The RP/PA700 complex is composed of at least 17 different subunits in two subcomplexes, the base and the lid, which form the portions proximal and distal to the 20S proteolytic core, respectively. Interacts with UCH1 and UCH2. In terms of tissue distribution, preferentially expressed in flowers.

Its function is as follows. Acts as a regulatory subunit of the 26 proteasome which is involved in the ATP-dependent degradation of ubiquitinated proteins. The chain is 26S proteasome non-ATPase regulatory subunit 3 homolog B from Arabidopsis thaliana (Mouse-ear cress).